We begin with the raw amino-acid sequence, 359 residues long: UPF0283 membrane protein RHE_CH02332 (359 aa).

A disordered region spans residues 1-61; sequence MSKPPSDLPR…EDPFINPDRD (61 aa). Helical transmembrane passes span 77–97 and 111–131; these read FGKIALAAFGILLSLGIGLWT and LGYAALGVLAIGILAVLALVI.

The protein belongs to the UPF0283 family.

Its subcellular location is the cell inner membrane. In Rhizobium etli (strain ATCC 51251 / DSM 11541 / JCM 21823 / NBRC 15573 / CFN 42), this protein is UPF0283 membrane protein RHE_CH02332.